Here is a 691-residue protein sequence, read N- to C-terminus: Elongation factor G (691 aa).

The tr-type G domain maps to 8–283 (EDYRNFGIMA…AVVDYLPSPA (276 aa)). GTP contacts are provided by residues 17-24 (AHIDAGKT), 81-85 (DTPGH), and 135-138 (NKMD).

It belongs to the TRAFAC class translation factor GTPase superfamily. Classic translation factor GTPase family. EF-G/EF-2 subfamily.

Its subcellular location is the cytoplasm. In terms of biological role, catalyzes the GTP-dependent ribosomal translocation step during translation elongation. During this step, the ribosome changes from the pre-translocational (PRE) to the post-translocational (POST) state as the newly formed A-site-bound peptidyl-tRNA and P-site-bound deacylated tRNA move to the P and E sites, respectively. Catalyzes the coordinated movement of the two tRNA molecules, the mRNA and conformational changes in the ribosome. This is Elongation factor G from Methylobacterium radiotolerans (strain ATCC 27329 / DSM 1819 / JCM 2831 / NBRC 15690 / NCIMB 10815 / 0-1).